A 434-amino-acid chain; its full sequence is Pyrichalasin H cluster regulator BC2 (434 aa).

2 disordered regions span residues 297-321 and 362-383; these read GSSP…CSPL and HPGH…RLSH. Residues 298 to 309 show a composition bias toward polar residues; it reads SSPSGTPESELT. Over residues 362–380 the composition is skewed to basic and acidic residues; the sequence is HPGHEDHQQQQEEVKQHDR.

Its subcellular location is the nucleus. Functionally, transcription factor probably involved in regulation of gene cluster that mediates the biosynthesis of a tyrosine-derived cytochalasan acting as a fungal signal recognized by resistant rice plants and leads to avirulence in Pi33 resistant rice cultivars. In Pyricularia oryzae (strain 70-15 / ATCC MYA-4617 / FGSC 8958) (Rice blast fungus), this protein is Pyrichalasin H cluster regulator BC2.